The sequence spans 477 residues: Glycogen synthase (477 aa).

Position 15 (Lys-15) interacts with ADP-alpha-D-glucose.

The protein belongs to the glycosyltransferase 1 family. Bacterial/plant glycogen synthase subfamily.

It carries out the reaction [(1-&gt;4)-alpha-D-glucosyl](n) + ADP-alpha-D-glucose = [(1-&gt;4)-alpha-D-glucosyl](n+1) + ADP + H(+). It participates in glycan biosynthesis; glycogen biosynthesis. Its function is as follows. Synthesizes alpha-1,4-glucan chains using ADP-glucose. This is Glycogen synthase from Caldicellulosiruptor saccharolyticus (strain ATCC 43494 / DSM 8903 / Tp8T 6331).